We begin with the raw amino-acid sequence, 178 residues long: MTATATLGGGCFWCVEAAFEELDGVESVTSGYAGGHTEDPTYREVCSGNTGHAEVVQVAYDSDVLAYEDLLEVFFTVHDPTQLNRQGPDVGSQYRSIVLYHDDTQRELAEAYIESLDEAGEYDDDIVTEIERLETFYRAEENHQNYFEKNPQDAYCRMHAQPKIETVREAFAEKVDSR.

The active site involves Cys-11.

The protein belongs to the MsrA Met sulfoxide reductase family.

It catalyses the reaction L-methionyl-[protein] + [thioredoxin]-disulfide + H2O = L-methionyl-(S)-S-oxide-[protein] + [thioredoxin]-dithiol. The catalysed reaction is [thioredoxin]-disulfide + L-methionine + H2O = L-methionine (S)-S-oxide + [thioredoxin]-dithiol. Functionally, has an important function as a repair enzyme for proteins that have been inactivated by oxidation. Catalyzes the reversible oxidation-reduction of methionine sulfoxide in proteins to methionine. This is Peptide methionine sulfoxide reductase MsrA from Natronomonas pharaonis (strain ATCC 35678 / DSM 2160 / CIP 103997 / JCM 8858 / NBRC 14720 / NCIMB 2260 / Gabara) (Halobacterium pharaonis).